The chain runs to 226 residues: UPF0173 metal-dependent hydrolase GWCH70_2696 (226 aa).

Belongs to the UPF0173 family.

The chain is UPF0173 metal-dependent hydrolase GWCH70_2696 from Geobacillus sp. (strain WCH70).